The chain runs to 466 residues: Membrane-bound lytic murein transglycosylase F (466 aa).

Residues 1 to 24 (MKRFKLNYFIIGLIAILLTWSLWT) form the signal peptide. Positions 25 to 268 (TVPWRNAHQD…RLEEKYLGHV (244 aa)) are non-LT domain. The segment at 269-466 (GGFDYVDTKT…KEKKAAQLAD (198 aa)) is LT domain. Residue Glu-313 is part of the active site.

In the N-terminal section; belongs to the bacterial solute-binding protein 3 family. The protein in the C-terminal section; belongs to the transglycosylase Slt family.

The protein resides in the cell outer membrane. It catalyses the reaction Exolytic cleavage of the (1-&gt;4)-beta-glycosidic linkage between N-acetylmuramic acid (MurNAc) and N-acetylglucosamine (GlcNAc) residues in peptidoglycan, from either the reducing or the non-reducing ends of the peptidoglycan chains, with concomitant formation of a 1,6-anhydrobond in the MurNAc residue.. Murein-degrading enzyme that degrades murein glycan strands and insoluble, high-molecular weight murein sacculi, with the concomitant formation of a 1,6-anhydromuramoyl product. Lytic transglycosylases (LTs) play an integral role in the metabolism of the peptidoglycan (PG) sacculus. Their lytic action creates space within the PG sacculus to allow for its expansion as well as for the insertion of various structures such as secretion systems and flagella. This chain is Membrane-bound lytic murein transglycosylase F, found in Sodalis glossinidius (strain morsitans).